Here is a 475-residue protein sequence, read N- to C-terminus: Ribulose bisphosphate carboxylase large chain (475 aa).

The propeptide occupies 1–2; that stretch reads MV. At Pro3 the chain carries N-acetylproline. The residue at position 14 (Lys14) is an N6,N6,N6-trimethyllysine. Substrate-binding residues include Asn123 and Thr173. Lys175 acts as the Proton acceptor in catalysis. Lys177 is a binding site for substrate. Mg(2+) is bound by residues Lys201, Asp203, and Glu204. An N6-carboxylysine modification is found at Lys201. The active-site Proton acceptor is the His294. The substrate site is built by Arg295, His327, and Ser379.

It belongs to the RuBisCO large chain family. Type I subfamily. Heterohexadecamer of 8 large chains and 8 small chains. Mg(2+) serves as cofactor.

The protein resides in the plastid. It is found in the chloroplast. It carries out the reaction 2 (2R)-3-phosphoglycerate + 2 H(+) = D-ribulose 1,5-bisphosphate + CO2 + H2O. The enzyme catalyses D-ribulose 1,5-bisphosphate + O2 = 2-phosphoglycolate + (2R)-3-phosphoglycerate + 2 H(+). Its function is as follows. RuBisCO catalyzes two reactions: the carboxylation of D-ribulose 1,5-bisphosphate, the primary event in carbon dioxide fixation, as well as the oxidative fragmentation of the pentose substrate in the photorespiration process. Both reactions occur simultaneously and in competition at the same active site. The protein is Ribulose bisphosphate carboxylase large chain of Chlamydomonas moewusii (Chlamydomonas eugametos).